Consider the following 251-residue polypeptide: Cell division protein ZapD (251 aa).

The protein belongs to the ZapD family. As to quaternary structure, interacts with FtsZ.

The protein localises to the cytoplasm. Its function is as follows. Cell division factor that enhances FtsZ-ring assembly. Directly interacts with FtsZ and promotes bundling of FtsZ protofilaments, with a reduction in FtsZ GTPase activity. In Janthinobacterium sp. (strain Marseille) (Minibacterium massiliensis), this protein is Cell division protein ZapD.